A 71-amino-acid polypeptide reads, in one-letter code: UPF0346 protein SAK_1533 (71 aa).

It belongs to the UPF0346 family.

The chain is UPF0346 protein SAK_1533 from Streptococcus agalactiae serotype Ia (strain ATCC 27591 / A909 / CDC SS700).